Reading from the N-terminus, the 353-residue chain is Rhodopsin (353 aa).

The Extracellular portion of the chain corresponds to 1–36; sequence MNGTEGPYFYIPMVNTTGIVRSPYEYPQYYLVNPAA. Residues Asn-2 and Asn-15 are each glycosylated (N-linked (GlcNAc...) asparagine). A helical membrane pass occupies residues 37 to 61; the sequence is YAALGAYMFLLILIGFPVNFLTLYV. The Cytoplasmic portion of the chain corresponds to 62-73; that stretch reads TIEHKKLRTPLN. A helical transmembrane segment spans residues 74-96; sequence YILLNLAVADLFMVFGGFTTTMY. The Extracellular portion of the chain corresponds to 97-110; sequence TSMHGYFVLGRLGC. Cys-110 and Cys-187 form a disulfide bridge. Residues 111–133 form a helical membrane-spanning segment; the sequence is NLEGFFATLGGEIALWSLVVLAV. The 'Ionic lock' involved in activated form stabilization motif lies at 134–136; sequence ERW. Topologically, residues 134–152 are cytoplasmic; that stretch reads ERWMVVCKPISNFRFGEDH. A helical membrane pass occupies residues 153–173; it reads AIMGLAFTWVMAAACAVPPLV. Residues 174–202 are Extracellular-facing; it reads GWSRYIPEGMQCSCGIDYYTRAEGFNNES. Asn-200 carries N-linked (GlcNAc...) asparagine glycosylation. A helical transmembrane segment spans residues 203–224; that stretch reads FVIYMFVCHFLIPLVVVFFCYG. Residues 225–252 are Cytoplasmic-facing; it reads RLLCAVKEAAAAQQESETTQRAEREVSR. A helical transmembrane segment spans residues 253-274; sequence MVVIMVVAFLVCWCPYAGVAWY. The Extracellular portion of the chain corresponds to 275–286; it reads IFTHQGSEFGPL. A helical transmembrane segment spans residues 287–308; it reads FMTFPAFFAKSSSIYNPMIYIC. At Lys-296 the chain carries N6-(retinylidene)lysine. Residues 309 to 353 are Cytoplasmic-facing; sequence MNKQFRQCMITTLCCGKNPFEEEEGASTTSKTEASSVSSSSVSPA. 2 S-palmitoyl cysteine lipidation sites follow: Cys-322 and Cys-323. The disordered stretch occupies residues 329 to 353; that stretch reads EEEEGASTTSKTEASSVSSSSVSPA. The span at 334 to 353 shows a compositional bias: low complexity; that stretch reads ASTTSKTEASSVSSSSVSPA.

The protein belongs to the G-protein coupled receptor 1 family. Opsin subfamily. Phosphorylated on some or all of the serine and threonine residues present in the C-terminal region. Post-translationally, contains one covalently linked retinal chromophore.

Its subcellular location is the membrane. It localises to the cell projection. The protein localises to the cilium. It is found in the photoreceptor outer segment. Its function is as follows. Photoreceptor required for image-forming vision at low light intensity. While most salt water fish species use retinal as chromophore, most freshwater fish use 3-dehydroretinal, or a mixture of retinal and 3-dehydroretinal. Light-induced isomerization of 11-cis to all-trans retinal triggers a conformational change that activates signaling via G-proteins. Subsequent receptor phosphorylation mediates displacement of the bound G-protein alpha subunit by arrestin and terminates signaling. In Chelon auratus (Golden grey mullet), this protein is Rhodopsin (rho).